The primary structure comprises 680 residues: Protein FAR1-RELATED SEQUENCE 11 (680 aa).

Positions 1-36 (MSDDPGQMLLIYDDPSDQRSLSLDDASSTEESPDDN) are disordered. Positions 62–156 (EFYSTFAKRC…ANHHNHELLE (95 aa)) constitute an FAR1 domain. An MULE domain is found at 277–373 (AVVFDTTHRL…CIWMVVGKFP (97 aa)). The SWIM-type zinc finger occupies 556-589 (YWVPQEGIISCSCQLFEFSGFLCRHALRVLSTGN).

Belongs to the FHY3/FAR1 family. As to expression, expressed in hypocotyls, rosette and cauline leaves, inflorescences stems, flowers and siliques.

It is found in the nucleus. Its function is as follows. Putative transcription activator involved in regulating light control of development. In Arabidopsis thaliana (Mouse-ear cress), this protein is Protein FAR1-RELATED SEQUENCE 11 (FRS11).